The primary structure comprises 207 residues: Testis-expressed protein 35 (207 aa).

Residues 43–79 (RKGMTRELKNELREVREQLTEKMEEIKQIKDIMDKDF) adopt a coiled-coil conformation.

As to expression, testis-specific. Expressed during spermatogenesis.

The protein resides in the nucleus. The polypeptide is Testis-expressed protein 35 (Tex35) (Mus musculus (Mouse)).